The chain runs to 328 residues: MRTFNFLSFPQVHRQALVKAVLVAIATVSLLLTSDVINPQSAQAYPFWAQQTAPETPREATGRIVCANCHLAQKPAEIEIPHSVLPDSVFEAVVKIPYDPASQQVLGDGSKGGLNVGAVLMLPDGFKIAPPDRIPEEMQEKLGGVYFQSYKEGQDNVVIVGPLPGDQYKEIVFPVLAPDPSQNKGIHFGKYAVHLGANRGRGQVYPTGEPSNNNAFKASTAGTISQISKTEAGGYEVTITSEAGPVVENIPAGPELIVSEGQAIEVGQFLTSNPNVGGFGQKDTEVVLQNPGRIKGLVLFLGGIMLCQILLVIKKKQVETVQAAEMNF.

Positions 1-44 (MRTFNFLSFPQVHRQALVKAVLVAIATVSLLLTSDVINPQSAQA) are cleaved as a signal peptide. 4 residues coordinate heme: Y45, C66, C69, and H70. Residues 294-314 (IKGLVLFLGGIMLCQILLVIK) form a helical membrane-spanning segment.

The protein belongs to the cytochrome f family. In terms of assembly, the 4 large subunits of the cytochrome b6-f complex are cytochrome b6, subunit IV (17 kDa polypeptide, PetD), cytochrome f and the Rieske protein, while the 4 small subunits are PetG, PetL, PetM and PetN. The complex functions as a dimer. Heme is required as a cofactor.

The protein localises to the cellular thylakoid membrane. In terms of biological role, component of the cytochrome b6-f complex, which mediates electron transfer between photosystem II (PSII) and photosystem I (PSI), cyclic electron flow around PSI, and state transitions. The polypeptide is Cytochrome f (Microcystis aeruginosa (strain NIES-843 / IAM M-2473)).